The primary structure comprises 261 residues: UPF0177 protein YvdC (261 aa).

6 helical membrane passes run 15 to 35 (WVIVIILALLFSALSVSIFHL), 43 to 63 (VLSIVGLIFAYHKSVWLVLFI), 84 to 104 (LDTVIFFIIFLLTIISSYLIA), 123 to 143 (IIIGFALLFLVSILTGIFAQI), 197 to 217 (YFAFLTALLLFAYMHGPTDLY), and 239 to 259 (FYLNMSVHLLWNLFGLVIALV).

The protein belongs to the UPF0177 family.

The protein localises to the cell membrane. This is UPF0177 protein YvdC (yvdC) from Lactococcus lactis subsp. lactis (strain IL1403) (Streptococcus lactis).